The sequence spans 503 residues: Zinc-regulated transporter 3 (503 aa).

A run of 3 helical transmembrane segments spans residues 8–28 (LLFSLISSVLCILGALCVPLL), 42–62 (LVNYGLSLSAGSMITTSLYML), and 75–95 (FPGLLLGICLSFFLNYLVHAF). The segment at 112 to 171 (GSHIHSKSHSHSHSHSHADSHSNFSNDHDLENAPSEHGYATSSSSVSENDPLITKDSDRP) is disordered. The span at 115 to 126 (IHSKSHSHSHSH) shows a compositional bias: basic residues. Residues 127–142 (SHADSHSNFSNDHDLE) show a composition bias toward basic and acidic residues. Phosphoserine is present on residues S178 and S188. Disordered regions lie at residues 221-244 (QSERNVPHGCEGSEDNGQSDDKDH) and 274-295 (HHSSESPENYGSNQLSHSFSSP). The span at 280–295 (PENYGSNQLSHSFSSP) shows a compositional bias: polar residues. Helical transmembrane passes span 336–356 (IGMQTCLVLALHKFPEGFIIF), 371–391 (IFLSLTIHNFVEGFAMTLPFY), 398–418 (WVAILITAVLGGGSQPLGALI), 438–458 (LLSVTAGFLLVIGLQMFQTGI), and 482–502 (GTTCLKWCCTGVLLILASALF).

Belongs to the ZIP transporter (TC 2.A.5) family.

Its subcellular location is the vacuole membrane. In terms of biological role, transports zinc from storage in the vacuole to the cytoplasm. The chain is Zinc-regulated transporter 3 (ZRT3) from Saccharomyces cerevisiae (strain ATCC 204508 / S288c) (Baker's yeast).